The chain runs to 642 residues: Chaperone protein HtpG (642 aa).

Residues 1 to 350 (MATDTQKETL…SNDLSLNVSR (350 aa)) are a; substrate-binding. The tract at residues 351-567 (EILQNDHAVD…EYDMGLQMRR (217 aa)) is b. The segment at 568–642 (LLEQAGQKLP…MNKLIVQLSK (75 aa)) is c.

Belongs to the heat shock protein 90 family. Homodimer.

It localises to the cytoplasm. Its function is as follows. Molecular chaperone. Has ATPase activity. This is Chaperone protein HtpG from Marinomonas sp. (strain MWYL1).